The following is a 162-amino-acid chain: NADH-quinone oxidoreductase subunit I (162 aa).

4Fe-4S ferredoxin-type domains lie at 52-82 (LRRY…IEAG) and 93-122 (TRYD…EGPN). [4Fe-4S] cluster contacts are provided by Cys-62, Cys-65, Cys-68, Cys-72, Cys-102, Cys-105, Cys-108, and Cys-112.

It belongs to the complex I 23 kDa subunit family. As to quaternary structure, NDH-1 is composed of 14 different subunits. Subunits NuoA, H, J, K, L, M, N constitute the membrane sector of the complex. [4Fe-4S] cluster serves as cofactor.

It localises to the cell inner membrane. The enzyme catalyses a quinone + NADH + 5 H(+)(in) = a quinol + NAD(+) + 4 H(+)(out). Its function is as follows. NDH-1 shuttles electrons from NADH, via FMN and iron-sulfur (Fe-S) centers, to quinones in the respiratory chain. The immediate electron acceptor for the enzyme in this species is believed to be ubiquinone. Couples the redox reaction to proton translocation (for every two electrons transferred, four hydrogen ions are translocated across the cytoplasmic membrane), and thus conserves the redox energy in a proton gradient. The polypeptide is NADH-quinone oxidoreductase subunit I (Methylobacterium sp. (strain 4-46)).